Consider the following 347-residue polypeptide: Major capsid protein (347 aa).

The protein belongs to the T7virus major capsid protein family. In terms of assembly, homohexamer. Interacts with the connector protein and the minor capsid protein. Interacts with the capsid assembly scaffolding protein; capsid proteins and scaffolding proteins form building blocks that assemble to form the procapsid, each hexamer of the major capsid protein interacting with 2 scaffolding proteins.

It localises to the virion. Functionally, assembles with the minor capsid protein to form an icosahedral capsid with a T=7 symmetry, about 60 nm in diameter, and consisting of 415 capsid proteins. The major and minor capsid proteins are incorporated into the capsid in about a 90/10 ratio respectively. Once the capsid formed, encapsidates one single copy of the viral genome. The protein is Major capsid protein (10) of Escherichia coli (Bacteriophage T3).